A 499-amino-acid chain; its full sequence is Probable malate:quinone oxidoreductase 4 (499 aa).

This sequence belongs to the MQO family. Requires FAD as cofactor.

It catalyses the reaction (S)-malate + a quinone = a quinol + oxaloacetate. The protein operates within carbohydrate metabolism; tricarboxylic acid cycle; oxaloacetate from (S)-malate (quinone route): step 1/1. The chain is Probable malate:quinone oxidoreductase 4 from Staphylococcus epidermidis (strain ATCC 35984 / DSM 28319 / BCRC 17069 / CCUG 31568 / BM 3577 / RP62A).